A 281-amino-acid polypeptide reads, in one-letter code: ATP phosphoribosyltransferase (281 aa).

It belongs to the ATP phosphoribosyltransferase family. Long subfamily. Mg(2+) is required as a cofactor.

It is found in the cytoplasm. It carries out the reaction 1-(5-phospho-beta-D-ribosyl)-ATP + diphosphate = 5-phospho-alpha-D-ribose 1-diphosphate + ATP. The protein operates within amino-acid biosynthesis; L-histidine biosynthesis; L-histidine from 5-phospho-alpha-D-ribose 1-diphosphate: step 1/9. Its activity is regulated as follows. Feedback inhibited by histidine. Its function is as follows. Catalyzes the condensation of ATP and 5-phosphoribose 1-diphosphate to form N'-(5'-phosphoribosyl)-ATP (PR-ATP). Has a crucial role in the pathway because the rate of histidine biosynthesis seems to be controlled primarily by regulation of HisG enzymatic activity. The polypeptide is ATP phosphoribosyltransferase (Kocuria rhizophila (strain ATCC 9341 / DSM 348 / NBRC 103217 / DC2201)).